The sequence spans 1268 residues: Neurocan core protein (1268 aa).

Positions 1-22 (MGAGSVWASGLLLLWLLLLVAG) are cleaved as a signal peptide. An Ig-like V-type domain is found at 37–157 (RMLKSGSGPV…EQDLVTLEVT (121 aa)). Disulfide bonds link cysteine 58–cysteine 139, cysteine 181–cysteine 252, cysteine 205–cysteine 226, cysteine 279–cysteine 354, and cysteine 303–cysteine 324. An N-linked (GlcNAc...) asparagine glycan is attached at asparagine 121. Link domains lie at 159–254 (VVFH…YCFA) and 258–356 (GGEV…YCFR). An N-linked (GlcNAc...) asparagine glycan is attached at asparagine 339. Disordered regions lie at residues 363-391 (QHGDSEIPSSGDEGEIVSAEGPPGRELKP), 406-442 (PLMSSGEGEPPDLTWTQAPEETLGSTPGGPTLASWPS), 472-540 (PLGT…DQSH), and 574-630 (ISPS…LQAS). Serine 380 and serine 410 each carry an O-linked (Xyl...) (chondroitin sulfate) serine glycan. Positions 419–430 (TWTQAPEETLGS) are enriched in polar residues. Positions 575-585 (SPSVPSTESTP) are enriched in low complexity. The segment covering 608–617 (PSEPPAPSPG) has biased composition (pro residues). Positions 618 to 630 (PSEALSAVSLQAS) are enriched in low complexity. N-linked (GlcNAc...) asparagine glycosylation occurs at asparagine 742. Positions 960–996 (PTDPCENNPCLHGGTCHTNGTVYGCSCDQGYAGENCE) constitute an EGF-like 1 domain. Cystine bridges form between cysteine 964/cysteine 975, cysteine 969/cysteine 984, cysteine 986/cysteine 995, cysteine 1002/cysteine 1013, cysteine 1007/cysteine 1022, cysteine 1024/cysteine 1033, cysteine 1040/cysteine 1051, cysteine 1068/cysteine 1160, cysteine 1136/cysteine 1152, cysteine 1167/cysteine 1210, and cysteine 1196/cysteine 1223. N-linked (GlcNAc...) asparagine glycosylation is present at asparagine 978. Residues 998-1034 (DIDDCLCSPCENGGTCIDEVNGFICLCLPSYGGSLCE) enclose the EGF-like 2; calcium-binding domain. One can recognise a C-type lectin domain in the interval 1036–1165 (DTEGCDRGWH…LPYVCKKGTV (130 aa)). One can recognise a Sushi domain in the interval 1165–1225 (VLCGPPPAVE…WDRPQIMCIK (61 aa)). An N-linked (GlcNAc...) asparagine glycan is attached at asparagine 1175. Residues 1228 to 1255 (RSHRMRRHHHHPHRHHKPRKEHRKHKRH) show a composition bias toward basic residues. The tract at residues 1228–1268 (RSHRMRRHHHHPHRHHKPRKEHRKHKRHPAEDWEKDEGDFC) is disordered.

The protein belongs to the aggrecan/versican proteoglycan family. In terms of processing, O-glycosylated; contains chondroitin sulfate. Brain.

It is found in the secreted. Its function is as follows. May modulate neuronal adhesion and neurite growth during development by binding to neural cell adhesion molecules (NG-CAM and N-CAM). Chondroitin sulfate proteoglycan; binds to hyaluronic acid. The polypeptide is Neurocan core protein (Ncan) (Mus musculus (Mouse)).